Here is a 123-residue protein sequence, read N- to C-terminus: Large ribosomal subunit protein bL20 (123 aa).

The protein belongs to the bacterial ribosomal protein bL20 family.

In terms of biological role, binds directly to 23S ribosomal RNA and is necessary for the in vitro assembly process of the 50S ribosomal subunit. It is not involved in the protein synthesizing functions of that subunit. This is Large ribosomal subunit protein bL20 (rplT) from Chlamydia muridarum (strain MoPn / Nigg).